The following is a 169-amino-acid chain: Transcription regulatory protein SNF11 (169 aa).

The disordered stretch occupies residues 1 to 24 (MSSEIAYSNTNTNTENENRNTGAG). Residue S2 is modified to N-acetylserine. Positions 9–21 (NTNTNTENENRNT) are enriched in low complexity. A run of 8 repeats spans residues 28–31 (NTNA), 32–35 (NANA), 36–39 (NATA), 40–43 (NATA), 44–47 (NATA), 48–51 (NATA), 76–80 (LLARV), and 160–165 (LLLARV). Residues 28–51 (NTNANANANATANATANATANATA) form a 6 X 4 AA tandem repeats of N-[AT]-[NT]-A region. The 2 X 5 AA repeats of L-L-A-R-V stretch occupies residues 76–165 (LLARVIQMNN…SKLYLLLARV (90 aa)).

As to quaternary structure, component of the SWI/SNF global transcription activator complex. The 1.14 MDa SWI/SNF complex is composed of 11 different subunits: one copy each of SWI1, SNF2/SWI2, SNF5, SNF12/SWP73, ARP7/SWP61, ARP9/SWP59; two copies each of SWI3, SNF6, SNF11, SWP82; and three copies of TAF14/SWP29.

It localises to the nucleus. In terms of biological role, involved in transcriptional activation. Component of the SWI/SNF complex, an ATP-dependent chromatin remodeling complex, which is required for the positive and negative regulation of gene expression of a large number of genes. It changes chromatin structure by altering DNA-histone contacts within a nucleosome, leading eventually to a change in nucleosome position, thus facilitating or repressing binding of gene-specific transcription factors. This is Transcription regulatory protein SNF11 (SNF11) from Saccharomyces cerevisiae (strain ATCC 204508 / S288c) (Baker's yeast).